A 79-amino-acid polypeptide reads, in one-letter code: uncharacterized protein (79 aa).

Positions 1–19 (MKYVALAFVLSLVILQISA) are cleaved as a signal peptide.

As to expression, nacreous layer of shell (at protein level). Expressed primarily in the mantle with highest level in the mantle pallium and lower level in the mantle edge.

Its subcellular location is the secreted. This is an uncharacterized protein from Pinctada maxima (Silver-lipped pearl oyster).